The primary structure comprises 392 residues: Putative glutamate--cysteine ligase 2 (392 aa).

The segment at 347–367 (AARKHGAAPEPGTRTRGDDGV) is disordered.

The protein belongs to the glutamate--cysteine ligase type 2 family. YbdK subfamily.

It carries out the reaction L-cysteine + L-glutamate + ATP = gamma-L-glutamyl-L-cysteine + ADP + phosphate + H(+). Its function is as follows. ATP-dependent carboxylate-amine ligase which exhibits weak glutamate--cysteine ligase activity. In Corynebacterium jeikeium (strain K411), this protein is Putative glutamate--cysteine ligase 2.